The chain runs to 504 residues: Histidine ammonia-lyase (504 aa).

The segment at residues 142-144 (ASG) is a cross-link (5-imidazolinone (Ala-Gly)). Position 143 is a 2,3-didehydroalanine (Ser) (S143).

The protein belongs to the PAL/histidase family. Post-translationally, contains an active site 4-methylidene-imidazol-5-one (MIO), which is formed autocatalytically by cyclization and dehydration of residues Ala-Ser-Gly.

It is found in the cytoplasm. It catalyses the reaction L-histidine = trans-urocanate + NH4(+). It functions in the pathway amino-acid degradation; L-histidine degradation into L-glutamate; N-formimidoyl-L-glutamate from L-histidine: step 1/3. The chain is Histidine ammonia-lyase from Staphylococcus aureus (strain USA300).